The primary structure comprises 43 residues: Metallothionein-2 (43 aa).

Residue Met-1 is modified to Blocked amino end (Met).

Belongs to the metallothionein superfamily. Type 5 family.

Functionally, this protein binds cations of several transition elements. Thought to be involved in metal ion homeostasis. This chain is Metallothionein-2 (MtnB), found in Drosophila melanogaster (Fruit fly).